The sequence spans 346 residues: 3',5'-cyclic-nucleotide phosphodiesterase (346 aa).

Belongs to the cyclic nucleotide phosphodiesterase class-II family.

It carries out the reaction a nucleoside 3',5'-cyclic phosphate + H2O = a nucleoside 5'-phosphate + H(+). The chain is 3',5'-cyclic-nucleotide phosphodiesterase (cgs2) from Schizosaccharomyces pombe (strain 972 / ATCC 24843) (Fission yeast).